Consider the following 433-residue polypeptide: tRNA(Ile)-lysidine synthase (433 aa).

Position 27–32 (27–32) interacts with ATP; it reads SGGLDS.

Belongs to the tRNA(Ile)-lysidine synthase family.

It is found in the cytoplasm. The enzyme catalyses cytidine(34) in tRNA(Ile2) + L-lysine + ATP = lysidine(34) in tRNA(Ile2) + AMP + diphosphate + H(+). In terms of biological role, ligates lysine onto the cytidine present at position 34 of the AUA codon-specific tRNA(Ile) that contains the anticodon CAU, in an ATP-dependent manner. Cytidine is converted to lysidine, thus changing the amino acid specificity of the tRNA from methionine to isoleucine. This is tRNA(Ile)-lysidine synthase from Legionella pneumophila subsp. pneumophila (strain Philadelphia 1 / ATCC 33152 / DSM 7513).